We begin with the raw amino-acid sequence, 129 residues long: MGGEGPGSDDIVKKMAQLMMQGAVMLDKTCPADGLPLFKLKTGDVVCPVHGKVVIVASDEEARDVEVEEIIREVRYRAARNVMKGLEEDNVDTVSKWLGVLETAERILAIRRGSRQGQGSVRGEGRESK.

The protein belongs to the UPF0148 family.

The protein is UPF0148 protein APE_0207 of Aeropyrum pernix (strain ATCC 700893 / DSM 11879 / JCM 9820 / NBRC 100138 / K1).